Reading from the N-terminus, the 346-residue chain is MSEPARLISPEKRGEDLDITLRPQSLDEFTGQAEARANLKVFIEAAKNRGEALDHVLFVGPPGLGKTTLAQIMAKELGVNFRSTSGPVIAKAGDLAALLTNLEERDVLFIDEIHRLNPAVEEILYPAMEDYQLDLIIGEGPAARSVKIDLSKFTLVAATTRLGLLTTPLRDRFGIPVRLTFYTVEELELIVRRGARLMNLPMTEEGAREIARRARGTPRIAGRLLRRVRDFAEVARAEAVTREIADEALTRLLVDNVGFDQLDKRYLNMIAVNFGGGPVGIETIAAGLSEPRDAIEDIIEPYMIQQGFIQRTPRGRVLTAIAWKHLGMQPPKEMEAAQFRLFQEDD.

The interval 1–182 (MSEPARLISP…FGIPVRLTFY (182 aa)) is large ATPase domain (RuvB-L). Residues L21, R22, G63, K66, T67, T68, 129-131 (EDY), R172, Y182, and R219 each bind ATP. T67 lines the Mg(2+) pocket. Residues 183-253 (TVEELELIVR…IADEALTRLL (71 aa)) form a small ATPAse domain (RuvB-S) region. Residues 256-346 (NVGFDQLDKR…AQFRLFQEDD (91 aa)) are head domain (RuvB-H). Residues R292, R311, and R316 each contribute to the DNA site.

It belongs to the RuvB family. As to quaternary structure, homohexamer. Forms an RuvA(8)-RuvB(12)-Holliday junction (HJ) complex. HJ DNA is sandwiched between 2 RuvA tetramers; dsDNA enters through RuvA and exits via RuvB. An RuvB hexamer assembles on each DNA strand where it exits the tetramer. Each RuvB hexamer is contacted by two RuvA subunits (via domain III) on 2 adjacent RuvB subunits; this complex drives branch migration. In the full resolvosome a probable DNA-RuvA(4)-RuvB(12)-RuvC(2) complex forms which resolves the HJ.

Its subcellular location is the cytoplasm. The catalysed reaction is ATP + H2O = ADP + phosphate + H(+). The RuvA-RuvB-RuvC complex processes Holliday junction (HJ) DNA during genetic recombination and DNA repair, while the RuvA-RuvB complex plays an important role in the rescue of blocked DNA replication forks via replication fork reversal (RFR). RuvA specifically binds to HJ cruciform DNA, conferring on it an open structure. The RuvB hexamer acts as an ATP-dependent pump, pulling dsDNA into and through the RuvAB complex. RuvB forms 2 homohexamers on either side of HJ DNA bound by 1 or 2 RuvA tetramers; 4 subunits per hexamer contact DNA at a time. Coordinated motions by a converter formed by DNA-disengaged RuvB subunits stimulates ATP hydrolysis and nucleotide exchange. Immobilization of the converter enables RuvB to convert the ATP-contained energy into a lever motion, pulling 2 nucleotides of DNA out of the RuvA tetramer per ATP hydrolyzed, thus driving DNA branch migration. The RuvB motors rotate together with the DNA substrate, which together with the progressing nucleotide cycle form the mechanistic basis for DNA recombination by continuous HJ branch migration. Branch migration allows RuvC to scan DNA until it finds its consensus sequence, where it cleaves and resolves cruciform DNA. In Rhizobium etli (strain ATCC 51251 / DSM 11541 / JCM 21823 / NBRC 15573 / CFN 42), this protein is Holliday junction branch migration complex subunit RuvB.